We begin with the raw amino-acid sequence, 68 residues long: Alpha/kappa-conotoxin-like pl14.2 (68 aa).

The first 27 residues, 1–27, serve as a signal peptide directing secretion; that stretch reads MPSVRSVTCCCLLWMMFSVQLVTPGSP. A propeptide spanning residues 28 to 39 is cleaved from the precursor; it reads ATAQLSGQRTAR. 2 disulfide bridges follow: C46–C61 and C50–C63. R64 carries the arginine amide modification. A propeptide spanning residues 65 to 68 is cleaved from the precursor; that stretch reads GKRD.

Belongs to the conotoxin J superfamily. As to expression, expressed by the venom duct.

The protein localises to the secreted. Functionally, highly inhibits both nicotinic acetylcholine receptors (neuronal (alpha-3/beta-4) and muscular (alpha-1/beta-1/epsilon/delta) subtypes) and the voltage-gated potassium channel Kv1.6/KCNA6 subtype. In Conus planorbis (Planorbis cone), this protein is Alpha/kappa-conotoxin-like pl14.2.